The chain runs to 118 residues: Ribulose bisphosphate carboxylase small subunit 2 (118 aa).

It belongs to the RuBisCO small chain family. As to quaternary structure, heterohexadecamer of 8 large and 8 small subunits.

In terms of biological role, ruBisCO catalyzes two reactions: the carboxylation of D-ribulose 1,5-bisphosphate, the primary event in carbon dioxide fixation, as well as the oxidative fragmentation of the pentose substrate. Both reactions occur simultaneously and in competition at the same active site. Although the small subunit is not catalytic it is essential for maximal activity. This Acidithiobacillus ferrooxidans (Thiobacillus ferrooxidans) protein is Ribulose bisphosphate carboxylase small subunit 2.